The following is a 332-amino-acid chain: Polygalacturonase inhibitor 1 (332 aa).

Residues 1 to 24 (MASTASFMLAVLLAVAVAAAPARA) form the signal peptide. Cystine bridges form between cysteine 27-cysteine 58 and cysteine 59-cysteine 66. LRR repeat units follow at residues 72 to 96 (VNNV…GLTA), 97 to 118 (LMSL…CLTA), 119 to 142 (LSNL…SLAR), 143 to 166 (IRSL…SFSD), 167 to 192 (LPNL…VQGQ), 193 to 215 (FRSL…AQDE), 216 to 236 (INTV…LFAA), 237 to 259 (GRPI…KLVF), 260 to 283 (PPEL…SLAA), and 284 to 310 (LSTL…VIRH). Asparagine 131 carries N-linked (GlcNAc...) asparagine glycosylation. Intrachain disulfides connect cysteine 298/cysteine 312, cysteine 298/cysteine 320, and cysteine 320/cysteine 329.

It belongs to the polygalacturonase-inhibiting protein family. As to expression, highly expressed in calli, immature and mature panicles, and in three inner floral organs: lodicules, stamens and carpels. Expressed at low level in seedling roots and mature stems.

It localises to the secreted. Its subcellular location is the cell wall. Functionally, inhibitor of fungal polygalacturonase. Regulates floral organ number. This chain is Polygalacturonase inhibitor 1, found in Oryza sativa subsp. japonica (Rice).